A 369-amino-acid polypeptide reads, in one-letter code: p21-activated protein kinase-interacting protein 1-like (369 aa).

WD repeat units lie at residues 33 to 70, 73 to 111, 114 to 153, 195 to 233, and 236 to 278; these read AHTA…EHGA, QHNG…CLKS, AHKG…SAFI, TIEK…CLCE, and AREN…NNVP. The disordered stretch occupies residues 311 to 369; sequence ATSTEANESEKPSAVKKKKVCGMNKSGKLTKQRRRIVPAKRKLEAPLQKKKKKKQNSSE. Basic residues-rich tracts occupy residues 338 to 350 and 358 to 369; these read KLTK…VPAK and QKKKKKKQNSSE.

It is found in the nucleus. Its subcellular location is the nucleolus. Functionally, negatively regulates the PAK1 kinase. PAK1 is a member of the PAK kinase family, which has been shown to play a positive role in the regulation of signaling pathways involving MAPK8 and RELA. PAK1 exists as an inactive homodimer, which is activated by binding of small GTPases such as CDC42 to an N-terminal regulatory domain. PAK1IP1 also binds to the N-terminus of PAK1, and inhibits the specific activation of PAK1 by CDC42. May be involved in ribosomal large subunit assembly. This Gallus gallus (Chicken) protein is p21-activated protein kinase-interacting protein 1-like (PAK1IP1).